Here is a 161-residue protein sequence, read N- to C-terminus: Large ribosomal subunit protein uL10 (161 aa).

The protein belongs to the universal ribosomal protein uL10 family. Part of the ribosomal stalk of the 50S ribosomal subunit. The N-terminus interacts with L11 and the large rRNA to form the base of the stalk. The C-terminus forms an elongated spine to which L12 dimers bind in a sequential fashion forming a multimeric L10(L12)X complex.

In terms of biological role, forms part of the ribosomal stalk, playing a central role in the interaction of the ribosome with GTP-bound translation factors. This chain is Large ribosomal subunit protein uL10 (rplJ), found in Wigglesworthia glossinidia brevipalpis.